Consider the following 470-residue polypeptide: 3-isopropylmalate dehydratase large subunit (470 aa).

Residues C346, C406, and C409 each contribute to the [4Fe-4S] cluster site.

The protein belongs to the aconitase/IPM isomerase family. LeuC type 1 subfamily. Heterodimer of LeuC and LeuD. [4Fe-4S] cluster serves as cofactor.

The catalysed reaction is (2R,3S)-3-isopropylmalate = (2S)-2-isopropylmalate. It participates in amino-acid biosynthesis; L-leucine biosynthesis; L-leucine from 3-methyl-2-oxobutanoate: step 2/4. In terms of biological role, catalyzes the isomerization between 2-isopropylmalate and 3-isopropylmalate, via the formation of 2-isopropylmaleate. This Shouchella clausii (strain KSM-K16) (Alkalihalobacillus clausii) protein is 3-isopropylmalate dehydratase large subunit.